We begin with the raw amino-acid sequence, 455 residues long: Peroxisomal membrane protein PEX3 (455 aa).

Residues 113–125 (TVLSDDFSTSQEG) are compositionally biased toward polar residues. A disordered region spans residues 113–135 (TVLSDDFSTSQEGAISEDTNKPP). The helical transmembrane segment at 155–171 (FLTLIYCESLLIVFLHL) threads the bilayer.

It belongs to the peroxin-3 family. As to quaternary structure, component of the peroxisomal docking complex, composed of at least PEX3, PEX13, PEX14 and PEX17. Component of the peroxisomal translocation complex, composed of at least PEX3, PEX2, PEX10 and PEX12. Interacts with PEX19. Interacts with the pexophagy receptor ATG30.

The protein localises to the peroxisome membrane. Peroxisomal membrane protein required for peroxisome biosynthesis. Shared component of both the peroxisomal docking complex and the peroxisomal translocation complex. The two types of peroxisomal matrix targeting signals, PTS1 and PTS2, are first recognized in the cytosol by their receptors PEX5 and PEX7, respectively, which then carry the cargo to the peroxisomal membrane. The peroxisomal targeting signal (PTS) receptor-cargo complexes interact with peroxisomal membrane protein (PMP) components of the docking complex. They have then additional downstream interactions with the translocation complex, leading to the transport of fully folded and oligomerized cargo into the peroxisome matrix. PEX3 acts as an anchoring site for PEX19 on the peroxisomal membrane and thus plays a crucial role in the assembly of the peroxisomal translocation complex. Is also essential for the interaction between the two complexes. Finally. PEX3 activates selective autophagy of peroxisomes (pexophagy) via interaction with the pexophagy receptor ATG30. The protein is Peroxisomal membrane protein PEX3 of Komagataella phaffii (strain GS115 / ATCC 20864) (Yeast).